The primary structure comprises 603 residues: Nuclear receptor subfamily 2 group C member 1 (603 aa).

Residues 1 to 178 (MATIEEIAHQ…RLQRCIAFGM (178 aa)) are required for interaction with KAT2B. Residues 110–185 (FDLCVVCGDK…FGMKQDSVQC (76 aa)) constitute a DNA-binding region (nuclear receptor). NR C4-type zinc fingers lie at residues 113-133 (CVVC…CEGC) and 149-173 (CRGS…LQRC). Phosphoserine is present on residues S197 and S215. The residue at position 220 (T220) is a Phosphothreonine. Residue T222 is modified to Phosphothreonine; by MAPK1. K250 is covalently cross-linked (Glycyl lysine isopeptide (Lys-Gly) (interchain with G-Cter in SUMO2)). An NR LBD domain is found at 348–590 (GSVHLITGDS…SVIPHILKME (243 aa)). A Phosphoserine; by PKC modification is found at S581. The segment at 584-603 (PHILKMEPADYNSQIIGHSI) is required for interaction with NRIP1. Residue K588 forms a Glycyl lysine isopeptide (Lys-Gly) (interchain with G-Cter in SUMO2) linkage.

It belongs to the nuclear hormone receptor family. NR2 subfamily. As to quaternary structure, homodimer. Heterodimer; binds DNA as a heterodimer with NR2C2 required for chromatin remodeling and for binding to promoter regions such as globin DR1 repeats. Interacts with NRIP1 (via its LXXLL motifs); the interaction provides corepressor activity. Interacts with HDAC3 (via the DNA-binding domain). Interacts with HDAC4 (via the DNA-binding domain). Interacts with PIAS1; the interaction is required for sumoylation of NR2C1. Interacts with UBE2I; the interaction is required for sumoylation of NR2C1. Interacts with KAT2B; the interaction acts as a corepressor of gene expression. Interacts with ESR1; the interaction prevents homodimerization of ESR1 and suppresses its transcriptional activity and cell growth. Post-translationally, sumoylation requires both PIAS1 and UBE2I. Sumoylation appears to dissociate NR2C1 from the PML nuclear bodies. Enhances the interaction with NRIP1 but inhibits interaction with KAT2B. In proliferating cells, stimulation by all-trans retinoic acid, activation of MAPK1-mediated phosphorylation and recruitment to PML bodies with subsequent sumoylation, suppresses OCT4 expression. Phosphorylated on several serine and threonine residues. Phosphorylation on Thr-222, stimulated by all-trans retinoic acid (atRA) mediates PML location and sumoylation in proliferating cells which then modulates its association with effector molecules, KAT2B and NRIP1. Phosphorylation on Ser-581 by PKC is important for protein stability and function as activator of RARB.

The protein resides in the nucleus. Its subcellular location is the PML body. Orphan nuclear receptor. Binds the IR7 element in the promoter of its own gene in an autoregulatory negative feedback mechanism. Primarily repressor of a broad range of genes. Binds to hormone response elements (HREs) consisting of two 5'-AGGTCA-3' half site direct repeat consensus sequences. Together with NR2C2, forms the core of the DRED (direct repeat erythroid-definitive) complex that represses embryonic and fetal globin transcription. Also activator of OCT4 gene expression. May be involved in stem cell proliferation and differentiation. Mediator of retinoic acid-regulated preadipocyte proliferation. The sequence is that of Nuclear receptor subfamily 2 group C member 1 (NR2C1) from Homo sapiens (Human).